A 1113-amino-acid chain; its full sequence is Period circadian protein homolog 3 (1113 aa).

Positions 1–48 (MDPCGDPAVPGGDCPQTRGPGLQGASGQEGPLQGTCVDSSHSEHEDRN) are disordered. A Nuclear export signal 1 motif is present at residues 54–63 (LIMVVQEMKK). PAS domains are found at residues 120–187 (LASE…PTQL) and 258–324 (YEAP…KVLK). One can recognise a PAC domain in the interval 333–376 (HSPVRFCTQNGEYVILDSSWSSFVNPWSRKVSFIIGRHKVRTSP). The Nuclear export signal 3 motif lies at 399–408 (LQEQIHKLLL). Positions 418–427 (GYGSLGSSGS) are enriched in low complexity. Disordered regions lie at residues 418–451 (GYGSLGSSGSQEQHVSITSSSESSGHCPEEGQHE), 485–530 (VAET…SSSY), 561–580 (TSSSSEEAKPIPEVDSSQRD), 718–742 (HSRCAGSERQKHKRKKLPAPVDTSS), and 871–906 (LVPAMAPNPEPTTSGHSQRRVEENWEAHSEELPFIS). Composition is skewed to polar residues over residues 428–441 (QEQHVSITSSSESS) and 501–530 (FSSSQTLKNKSTTDTGSGGNLQQEQPSSSY). Residues 551 to 750 (LKRKCISCTN…SSPGAHLCPH (200 aa)) form a CSNK1E binding domain region. Basic and acidic residues predominate over residues 566 to 580 (EEAKPIPEVDSSQRD). The short motif at 719–735 (SRCAGSERQKHKRKKLP) is the Nuclear localization signal element. A compositionally biased stretch (basic and acidic residues) spans 889–901 (RRVEENWEAHSEE). S907 bears the Phosphoserine mark. The Nuclear export signal 2 signature appears at 913–920 (LQLNLLQE). The interval 921–1010 (EMPAPSESAD…DRQRDEALPG (90 aa)) is disordered. Positions 962–986 (ATATAQQESAAASGSSASSIYFSST) are enriched in low complexity. A compositionally biased stretch (basic and acidic residues) spans 993-1007 (SENRQRPQDRQRDEA). The interval 1035 to 1113 (ERGREEVLKQ…LEQHPAEDTS (79 aa)) is CRY binding domain.

As to quaternary structure, homodimer. Component of the circadian core oscillator, which includes the CRY proteins, CLOCK or NPAS2, BMAL1 or BMAL2, CSNK1D and/or CSNK1E, TIMELESS and the PER proteins. Interacts directly with PER1, PER2, CRY1, CRY2, and TIMELESS; interaction with CRY1 and CRY2 is weak and not rhythmic. Interacts with FBXW11 and BTRC. Post-translationally, phosphorylation by CSNK1E is weak and appears to require association with PER1 and translocation to the nucleus. In terms of processing, ubiquitinated. In terms of tissue distribution, widely expressed. Expressed in heart, brain, lung, liver, skeletal muscle, testis, and at low level in the spleen and kidney. In brain, mainly found in the SCN, hippocampus, piriform cortex, and cerebellum. Lower level of expression in the neocortex. Expression exhibits synchronous oscillations in liver, skeletal muscle and testis.

It is found in the cytoplasm. The protein localises to the nucleus. Its function is as follows. Originally described as a core component of the circadian clock. The circadian clock, an internal time-keeping system, regulates various physiological processes through the generation of approximately 24 hour circadian rhythms in gene expression, which are translated into rhythms in metabolism and behavior. It is derived from the Latin roots 'circa' (about) and 'diem' (day) and acts as an important regulator of a wide array of physiological functions including metabolism, sleep, body temperature, blood pressure, endocrine, immune, cardiovascular, and renal function. Consists of two major components: the central clock, residing in the suprachiasmatic nucleus (SCN) of the brain, and the peripheral clocks that are present in nearly every tissue and organ system. Both the central and peripheral clocks can be reset by environmental cues, also known as Zeitgebers (German for 'timegivers'). The predominant Zeitgeber for the central clock is light, which is sensed by retina and signals directly to the SCN. The central clock entrains the peripheral clocks through neuronal and hormonal signals, body temperature and feeding-related cues, aligning all clocks with the external light/dark cycle. Circadian rhythms allow an organism to achieve temporal homeostasis with its environment at the molecular level by regulating gene expression to create a peak of protein expression once every 24 hours to control when a particular physiological process is most active with respect to the solar day. Transcription and translation of core clock components (CLOCK, NPAS2, BMAL1, BMAL2, PER1, PER2, PER3, CRY1 and CRY2) plays a critical role in rhythm generation, whereas delays imposed by post-translational modifications (PTMs) are important for determining the period (tau) of the rhythms (tau refers to the period of a rhythm and is the length, in time, of one complete cycle). A diurnal rhythm is synchronized with the day/night cycle, while the ultradian and infradian rhythms have a period shorter and longer than 24 hours, respectively. Disruptions in the circadian rhythms contribute to the pathology of cardiovascular diseases, cancer, metabolic syndromes and aging. A transcription/translation feedback loop (TTFL) forms the core of the molecular circadian clock mechanism. Transcription factors, CLOCK or NPAS2 and BMAL1 or BMAL2, form the positive limb of the feedback loop, act in the form of a heterodimer and activate the transcription of core clock genes and clock-controlled genes (involved in key metabolic processes), harboring E-box elements (5'-CACGTG-3') within their promoters. The core clock genes: PER1/2/3 and CRY1/2 which are transcriptional repressors form the negative limb of the feedback loop and interact with the CLOCK|NPAS2-BMAL1|BMAL2 heterodimer inhibiting its activity and thereby negatively regulating their own expression. This heterodimer also activates nuclear receptors NR1D1, NR1D2, RORA, RORB and RORG, which form a second feedback loop and which activate and repress BMAL1 transcription, respectively. Has a redundant role with the other PER proteins PER1 and PER2 and is not essential for the circadian rhythms maintenance. In contrast, plays an important role in sleep-wake timing and sleep homeostasis probably through the transcriptional regulation of sleep homeostasis-related genes, without influencing circadian parameters. Can bind heme. The polypeptide is Period circadian protein homolog 3 (Per3) (Mus musculus (Mouse)).